Reading from the N-terminus, the 264-residue chain is Tritrans,polycis-undecaprenyl-diphosphate synthase (geranylgeranyl-diphosphate specific) (264 aa).

The active site involves Asp-43. Position 43 (Asp-43) interacts with Mg(2+). Residues 44 to 47, Trp-48, His-60, and 88 to 90 contribute to the substrate site; these read GNRR and STE. Catalysis depends on Asn-91, which acts as the Proton acceptor. Substrate-binding positions include Phe-92, Arg-94, Arg-213, and 219 to 221; that span reads RIS. Glu-232 is a Mg(2+) binding site.

Belongs to the UPP synthase family. As to quaternary structure, homodimer. The cofactor is Mg(2+).

It catalyses the reaction geranylgeranyl diphosphate + 7 isopentenyl diphosphate = tri-trans,hepta-cis-undecaprenyl diphosphate + 7 diphosphate. Catalyzes the sequential condensation of isopentenyl diphosphate (IPP) with geranylgeranyl diphosphate (GGPP) to yield (2Z,6Z,10Z,14Z,18Z,22Z,26Z,30E,34E,38E)-undecaprenyl diphosphate (tritrans,heptacis-UPP). It is probably the precursor of glycosyl carrier lipids. This Pyrococcus furiosus (strain ATCC 43587 / DSM 3638 / JCM 8422 / Vc1) protein is Tritrans,polycis-undecaprenyl-diphosphate synthase (geranylgeranyl-diphosphate specific).